Reading from the N-terminus, the 106-residue chain is L-rhamnose mutarotase (106 aa).

Tyr-20 contacts substrate. His-24 serves as the catalytic Proton donor. Residues Tyr-43 and 78–79 (WW) contribute to the substrate site.

The protein belongs to the rhamnose mutarotase family. Homodimer.

Its subcellular location is the cytoplasm. The enzyme catalyses alpha-L-rhamnose = beta-L-rhamnose. It functions in the pathway carbohydrate metabolism; L-rhamnose metabolism. Functionally, involved in the anomeric conversion of L-rhamnose. This chain is L-rhamnose mutarotase, found in Leptothrix cholodnii (strain ATCC 51168 / LMG 8142 / SP-6) (Leptothrix discophora (strain SP-6)).